Here is a 130-residue protein sequence, read N- to C-terminus: MSSFEYPQDLRYLDTHEYVRLDGEIATIGITEFAVDQLGDVVFLELPDIGDLLTKGDTFGTIESVKAVEDLNAPITGTVVERNEILIESPDAVADDPYGEGWFLKVRVNDPDEVNDALTADEYRAEVEGE.

One can recognise a Lipoyl-binding domain in the interval Ile25–Arg107. Lys66 bears the N6-lipoyllysine mark.

Belongs to the GcvH family. The glycine cleavage system is composed of four proteins: P, T, L and H. The cofactor is (R)-lipoate.

Functionally, the glycine cleavage system catalyzes the degradation of glycine. The H protein shuttles the methylamine group of glycine from the P protein to the T protein. This chain is Glycine cleavage system H protein, found in Trichormus variabilis (strain ATCC 29413 / PCC 7937) (Anabaena variabilis).